The sequence spans 196 residues: NADH-quinone oxidoreductase subunit C (196 aa).

It belongs to the complex I 30 kDa subunit family. NDH-1 is composed of 14 different subunits. Subunits NuoB, C, D, E, F, and G constitute the peripheral sector of the complex.

It is found in the cell inner membrane. The enzyme catalyses a quinone + NADH + 5 H(+)(in) = a quinol + NAD(+) + 4 H(+)(out). In terms of biological role, NDH-1 shuttles electrons from NADH, via FMN and iron-sulfur (Fe-S) centers, to quinones in the respiratory chain. The immediate electron acceptor for the enzyme in this species is believed to be ubiquinone. Couples the redox reaction to proton translocation (for every two electrons transferred, four hydrogen ions are translocated across the cytoplasmic membrane), and thus conserves the redox energy in a proton gradient. In Rickettsia bellii (strain RML369-C), this protein is NADH-quinone oxidoreductase subunit C.